Reading from the N-terminus, the 297-residue chain is F-box only protein 2 (297 aa).

Positions 1-47 (MDGDGDPESVSHPEEASPEEQPEEAGAEASAEEEQLREAEEEEEAEA) are disordered. Over residues 16–47 (ASPEEQPEEAGAEASAEEEQLREAEEEEEAEA) the composition is skewed to acidic residues. One can recognise an F-box domain in the interval 48–95 (VEYLAELPEPLLLRVLAELPATELVQACRLVCLRWKELVDGAPLWLLK). At S106 the chain carries Phosphoserine. An FBA domain is found at 117-297 (FYFLSKRRRN…VTNSSVWVEP (181 aa)). A carbohydrate is bound by residues 214–216 (RTD) and 279–280 (YW).

As to quaternary structure, component of the SCF(FBXO2) complex consisting of CUL1, RBX1, SKP1 and FBXO2. Predominantly detected as heterodimer with SKP1; the heterodimer with SKP1 is not part of the SCF(FBXO2) complex. Detected in brain and cochlea, in epithelial support cells and hair cells of the organ of Corti (at protein level).

The protein resides in the cytoplasm. It localises to the microsome membrane. The protein operates within protein modification; protein ubiquitination. Substrate recognition component of a SCF (SKP1-CUL1-F-box protein) E3 ubiquitin-protein ligase complex that mediates the ubiquitination and subsequent proteasomal degradation of target proteins. Involved in the endoplasmic reticulum-associated degradation pathway (ERAD) for misfolded lumenal proteins by recognizing and binding sugar chains on unfolded glycoproteins that are retrotranslocated into the cytosol and promoting their ubiquitination and subsequent degradation. Prevents formation of cytosolic aggregates of unfolded glycoproteins that have been retrotranslocated into the cytosol. Able to recognize and bind denatured glycoproteins, preferentially those of the high-mannose type. The protein is F-box only protein 2 (Fbxo2) of Mus musculus (Mouse).